A 249-amino-acid polypeptide reads, in one-letter code: 2,3-bisphosphoglycerate-dependent phosphoglycerate mutase (249 aa).

Substrate is bound by residues 8–15 (RHGQSAWN), 21–22 (TG), arginine 60, 87–90 (ERHY), lysine 98, 114–115 (RR), and 183–184 (GN). Catalysis depends on histidine 9, which acts as the Tele-phosphohistidine intermediate. The active-site Proton donor/acceptor is the glutamate 87. The segment at 115 to 137 (RSYDTPPPPLPADDPRSPAGDAR) is disordered.

It belongs to the phosphoglycerate mutase family. BPG-dependent PGAM subfamily. In terms of assembly, homodimer.

It carries out the reaction (2R)-2-phosphoglycerate = (2R)-3-phosphoglycerate. The protein operates within carbohydrate degradation; glycolysis; pyruvate from D-glyceraldehyde 3-phosphate: step 3/5. Functionally, catalyzes the interconversion of 2-phosphoglycerate and 3-phosphoglycerate. This Nitratidesulfovibrio vulgaris (strain DSM 19637 / Miyazaki F) (Desulfovibrio vulgaris) protein is 2,3-bisphosphoglycerate-dependent phosphoglycerate mutase.